The sequence spans 237 residues: Terpene cyclase spyD (237 aa).

7 consecutive transmembrane segments (helical) span residues 17 to 37, 47 to 67, 71 to 91, 109 to 129, 138 to 158, 167 to 187, and 206 to 226; these read IYNV…IVTV, AIPL…VLVY, YLLF…IVYG, HLPL…YALA, IHGG…CQLL, SWTM…GEFL, and WCTG…WYMG.

The protein belongs to the paxB family.

It is found in the membrane. It catalyses the reaction (S)-(2E,6E,10E)-epoxygeranylgeranyl-triacetate lactone = sartorypyrone F. It carries out the reaction (S)-(2E,6E,10E)-epoxygeranylgeranyl-triacetate lactone = sartorypyrone D. The protein operates within secondary metabolite biosynthesis; terpenoid biosynthesis. Functionally, terpene cyclase; part of the gene cluster that mediates the biosynthesis of meroterpenoids called sartorypyrones. Within the pathway, spyD catalyzes the cyclization of epoxygeranylgeranyl-triacetate lactone. SpyD exhibits promiscuous activity, resulting in the formation of bicyclic sartorypyrone F and monocyclic sartorypyrone D. The biosynthesis of sartorypyrones begins with the production of triacetic acid lactone (TAL) by the NR-PKS spyA using one molecule of acetyl-CoA and two molecules of malonyl-CoA. The prenyltransferase spyF then conjugates geranylgeranyl pyrophosphate (GGPP) to TAL to form geranylgeranyl-triacetate lactone, for which the pathway-specific geranylgeranyl pyrophosphate synthase (GGPS) spyE is required to provide GGPP. Subsequently, geranylgeranyl-triacetate lactone is epoxidized at the terminal olein by the FAD-dependent monooxygenase spyC, followed by cyclization of the terpenoid component catalyzed by the terpene cyclase spyD to produce both the bicyclic sartorypyrone F and the monocyclic sartorypyrone D. Finally, the last step of the biosynthesis involves the acetylation of the meroterpenoids sartorypyrones D and F by the acetyltransferase SpyB to produce sartorypyrones A and G, respectively. The polypeptide is Terpene cyclase spyD (Aspergillus fumigatus (strain ATCC MYA-4609 / CBS 101355 / FGSC A1100 / Af293) (Neosartorya fumigata)).